A 464-amino-acid polypeptide reads, in one-letter code: Zinc transporter 6-A (464 aa).

At 1–33 (MGTIYLFRKTQRSLLGKLAQEFRLVTADRRSWK) the chain is on the cytoplasmic side. A helical transmembrane segment spans residues 34-54 (ILLFGAINVVCTAFLLTWCSS). The Extracellular portion of the chain corresponds to 55 to 64 (TNSMALTAYT). A helical transmembrane segment spans residues 65–85 (YLTIFDLFSLITSLISYWVTM). Residues 86-98 (KKPSPTYSFGFER) are Cytoplasmic-facing. A helical membrane pass occupies residues 99–119 (FEVLAVFASTVLAQLGALFIL). At 120–134 (KESAERFIEQPEIHT) the chain is on the extracellular side. Residues 135–155 (GRLLVGTFVALFFNLFTMLSI) traverse the membrane as a helical segment. Residues 156–200 (RNKPFAYVSDAASTSWLQEHVADLSRSLCGIIPGLSSIFLPRMNP) lie on the Cytoplasmic side of the membrane. The helical transmembrane segment at 201-221 (FVLIDIAGALALCITYMLIEI) threads the bilayer. Residues 222-223 (NN) lie on the Extracellular side of the membrane. Residues 224 to 244 (YFAVDTASAVAIAVMTFGTMY) traverse the membrane as a helical segment. Over 245-464 (PMSVYSGKVL…TPGQFTQFRQ (220 aa)) the chain is Cytoplasmic.

It belongs to the cation diffusion facilitator (CDF) transporter (TC 2.A.4) family. SLC30A subfamily. As to quaternary structure, heterodimer with SLC30A5; form a functional zinc ion transmembrane transporter.

Its subcellular location is the golgi apparatus. The protein resides in the trans-Golgi network membrane. Has probably no intrinsic transporter activity but together with SLC30A5 forms a functional zinc ion:proton antiporter heterodimer, mediating zinc entry into the lumen of organelles along the secretory pathway. As part of that zinc ion:proton antiporter, contributes to zinc ion homeostasis within the early secretory pathway and regulates the activation and folding of enzymes like alkaline phosphatases and enzymes involved in phosphatidylinositol glycan anchor biosynthesis. This chain is Zinc transporter 6-A (slc30a6-a), found in Xenopus laevis (African clawed frog).